We begin with the raw amino-acid sequence, 322 residues long: Epiphycan (322 aa).

Positions 1–19 are cleaved as a signal peptide; sequence MGMLARVALGLIIIDAVLA. Positions 58–108 are disordered; that stretch reads KVSERLSGNRELLTPGPQLGDNQDEDKDEESTPRLIDGSSPQEPEFPGLLG. O-linked (Xyl...) (dermatan sulfate) serine glycosylation is present at S64. O-linked (GalNAc...) serine glycosylation occurs at S96. Residues 106-143 enclose the LRRNT domain; sequence LLGPHTNEDFPTCLLCTCISTTVYCDDHELDAIPPLPK. A disulfide bond links C118 and C130. LRR repeat units follow at residues 144–165, 168–189, 192–213, 238–258, and 259–280; these read KTTY…DFAS, DLKR…AFRK, HLQE…PNTL, DLHH…PLPE, and SLRA…TFCN. Residues C279 and C312 are joined by a disulfide bond. Residues N283 and N302 are each glycosylated (N-linked (GlcNAc...) asparagine). Residues 290–310 form an LRR 6 repeat; that stretch reads ALEDIRLDGNPINLSRTPQAY.

It belongs to the small leucine-rich proteoglycan (SLRP) family. SLRP class III subfamily. Post-translationally, the O-linked polysaccharide on Ser-96 is probably the mucin type linked to GalNAc. There is one glycosaminoglycan chain, known to be dermatan sulfate, and it is probably the O-glycosylation at Ser-64. In terms of tissue distribution, confined to the middle zone of embryonic epiphyseal cartilage consisting of flattened chondrocytes and the ossifying region in the limb buds of chick embryos. Has also been detected in testis.

The protein localises to the secreted. It localises to the extracellular space. The protein resides in the extracellular matrix. May have a role in bone formation and also in establishing the ordered structure of cartilage through matrix organization. The protein is Epiphycan (Epyc) of Mus musculus (Mouse).